The primary structure comprises 311 residues: Heparan sulfate glucosamine 3-O-sulfotransferase 1 (311 aa).

The first 20 residues, 1 to 20 (MTLLLLGAVLLVAQPQLVHS), serve as a signal peptide directing secretion. Residue Asn52 is glycosylated (N-linked (GlcNAc...) asparagine). Residues 68–72 (KGGTR), Arg151, and Ser159 each bind 3'-phosphoadenylyl sulfate. 3 N-linked (GlcNAc...) asparagine glycosylation sites follow: Asn196, Asn246, and Asn253. Tyr259 is a binding site for 3'-phosphoadenylyl sulfate. The cysteines at positions 260 and 269 are disulfide-linked. 274 to 278 (KGRAH) provides a ligand contact to 3'-phosphoadenylyl sulfate.

This sequence belongs to the sulfotransferase 1 family.

The protein localises to the golgi apparatus lumen. The enzyme catalyses alpha-D-glucosaminyl-[heparan sulfate](n) + 3'-phosphoadenylyl sulfate = 3-sulfo-alpha-D-glucosaminyl-[heparan sulfate](n) + adenosine 3',5'-bisphosphate + H(+). Sulfotransferase that utilizes 3'-phospho-5'-adenylyl sulfate (PAPS) to catalyze the transfer of a sulfo group to position 3 of glucosamine residues in heparan. Catalyzes the rate limiting step in the biosynthesis of heparan sulfate (HSact). This modification is a crucial step in the biosynthesis of anticoagulant heparan sulfate as it completes the structure of the antithrombin pentasaccharide binding site. This is Heparan sulfate glucosamine 3-O-sulfotransferase 1 (Hs3st1) from Mus musculus (Mouse).